Here is a 427-residue protein sequence, read N- to C-terminus: Gamma-glutamyl phosphate reductase (427 aa).

It belongs to the gamma-glutamyl phosphate reductase family.

It is found in the cytoplasm. It catalyses the reaction L-glutamate 5-semialdehyde + phosphate + NADP(+) = L-glutamyl 5-phosphate + NADPH + H(+). It participates in amino-acid biosynthesis; L-proline biosynthesis; L-glutamate 5-semialdehyde from L-glutamate: step 2/2. Its function is as follows. Catalyzes the NADPH-dependent reduction of L-glutamate 5-phosphate into L-glutamate 5-semialdehyde and phosphate. The product spontaneously undergoes cyclization to form 1-pyrroline-5-carboxylate. This Rhizobium rhizogenes (strain K84 / ATCC BAA-868) (Agrobacterium radiobacter) protein is Gamma-glutamyl phosphate reductase.